The primary structure comprises 187 residues: Putative protein SSX8 (187 aa).

Disordered regions lie at residues 1–21 (MNGDDAFAKRPRDDDKASEKR) and 109–187 (PKIM…EDDE). One can recognise a KRAB-related domain in the interval 20–83 (KRSKAFNDIA…KQATDFQGNY (64 aa)). A Phosphoserine modification is found at S123. Residues 152 to 168 (KRSGPKRGRHAWTHRLR) are compositionally biased toward basic residues.

This sequence belongs to the SSX family. In terms of tissue distribution, not detected in any normal or tumor tissues.

Functionally, could act as a modulator of transcription. This Homo sapiens (Human) protein is Putative protein SSX8.